The sequence spans 218 residues: MGQKINPLGFRLGVTQNHHSYWFAQPKNYSKLLQEDQKMRNCIENYVYKNIRNSSNYGGIARIEIKRKTDLIQVEIHTGFPALLVENRKRGIEQLKTDVQSILTSGDRKLRMTLTEVTKPYGEPNILAEYIALQLESRVAFRRTMKKAIELAKKTNIKGIKIQIAGRLNGAEIARVEWAREGRVPLQTLRAKIDYCYYPAQTIYGVLGIKIWIFQDEK.

The KH type-2 domain maps to V47–T118.

Belongs to the universal ribosomal protein uS3 family. In terms of assembly, part of the 30S ribosomal subunit.

The protein resides in the plastid. It is found in the chloroplast. This is Small ribosomal subunit protein uS3c (rps3) from Physcomitrium patens (Spreading-leaved earth moss).